Reading from the N-terminus, the 116-residue chain is Holo-[acyl-carrier-protein] synthase (116 aa).

Residues aspartate 5 and glutamate 50 each contribute to the Mg(2+) site.

It belongs to the P-Pant transferase superfamily. AcpS family. It depends on Mg(2+) as a cofactor.

Its subcellular location is the cytoplasm. It carries out the reaction apo-[ACP] + CoA = holo-[ACP] + adenosine 3',5'-bisphosphate + H(+). Its function is as follows. Transfers the 4'-phosphopantetheine moiety from coenzyme A to a Ser of acyl-carrier-protein. This chain is Holo-[acyl-carrier-protein] synthase, found in Campylobacter lari (strain RM2100 / D67 / ATCC BAA-1060).